We begin with the raw amino-acid sequence, 72 residues long: Large ribosomal subunit protein uL29 (72 aa).

The protein belongs to the universal ribosomal protein uL29 family.

The chain is Large ribosomal subunit protein uL29 from Thermodesulfovibrio yellowstonii (strain ATCC 51303 / DSM 11347 / YP87).